We begin with the raw amino-acid sequence, 113 residues long: Photosystem II reaction center Psb28 protein (113 aa).

The protein belongs to the Psb28 family. In terms of assembly, part of the photosystem II complex.

The protein localises to the cellular thylakoid membrane. This is Photosystem II reaction center Psb28 protein from Prochlorococcus marinus (strain NATL2A).